Reading from the N-terminus, the 163-residue chain is Pheromone-binding protein (163 aa).

The first 22 residues, 1–22, serve as a signal peptide directing secretion; that stretch reads MMSVRLMLVVAVWLCLRVDASQ. Intrachain disulfides connect C39-C74, C70-C129, and C117-C138.

The protein belongs to the PBP/GOBP family. Antenna.

Functionally, this major soluble protein in olfactory sensilla of male moths might serve to solubilize the extremely hydrophobic pheromone molecules and to transport pheromone through the aqueous lymph to receptors located on olfactory cilia. The protein is Pheromone-binding protein of Heliothis virescens (Tobacco budworm moth).